The chain runs to 541 residues: Threonine--tRNA ligase catalytic subunit (541 aa).

The segment at 135–429 is catalytic; it reads DHRIIGERMD…LLEHFRGKLP (295 aa). Zn(2+)-binding residues include Cys227, His278, and His406.

This sequence belongs to the class-II aminoacyl-tRNA synthetase family. In terms of assembly, homodimer. Probably interacts with its editing subunit. Zn(2+) is required as a cofactor.

The protein resides in the cytoplasm. The enzyme catalyses tRNA(Thr) + L-threonine + ATP = L-threonyl-tRNA(Thr) + AMP + diphosphate + H(+). Its function is as follows. Catalyzes the attachment of threonine to tRNA(Thr) in a two-step reaction: L-threonine is first activated by ATP to form Thr-AMP and then transferred to the acceptor end of tRNA(Thr). Also activates L-serine and transfers it to tRNA(Thr) but cannot deacylate incorrectly charged amino acid; unlike most archaea the editing function is found in a freestanding protein. The chain is Threonine--tRNA ligase catalytic subunit from Metallosphaera sedula (strain ATCC 51363 / DSM 5348 / JCM 9185 / NBRC 15509 / TH2).